The chain runs to 364 residues: Autophagy-related protein 5 (364 aa).

Positions 1–13 (MASPNPYSYSPQL) are enriched in polar residues. Residues 1-103 (MASPNPYSYS…SLPPKPKPSS (103 aa)) are disordered. Over residues 28 to 42 (SSPSFRSTPFRSSRG) the composition is skewed to low complexity. The span at 43–53 (TGAGTGIGLGL) shows a compositional bias: gly residues. Over residues 72 to 82 (RSGDGSHDDLP) the composition is skewed to basic and acidic residues. A Glycyl lysine isopeptide (Lys-Gly) (interchain with G-Cter in ATG12) cross-link involves residue Lys-202. The segment at 262–306 (PSSPSPPSSDQQQPQRPGGSSSSGSYRVMQTLVPPRGPNNRTPQT) is disordered. The segment covering 269–286 (SSDQQQPQRPGGSSSSGS) has biased composition (low complexity).

Belongs to the ATG5 family. In terms of assembly, conjugated with atg12. In terms of processing, conjugated to atg12; which is essential for autophagy.

It localises to the preautophagosomal structure membrane. Its function is as follows. Involved in cytoplasm to vacuole transport (Cvt) and autophagic vesicle formation. Autophagy is essential for maintenance of amino acid levels and protein synthesis under nitrogen starvation. Required for selective autophagic degradation of the nucleus (nucleophagy). Also required for mitophagy, which eliminates defective or superfluous mitochondria in order to fulfill cellular energy requirements and prevent excess ROS production. Conjugation with atg12, through a ubiquitin-like conjugating system involving apg-5/atg7 as an E1-like activating enzyme and atg10 as an E2-like conjugating enzyme, is essential for its function. The atg12-apg-4/atg5 conjugate acts as an E3-like enzyme which is required for lipidation of apg-6/atg8 and apg-6/atg8 association to the vesicle membranes. This is Autophagy-related protein 5 (apg-4) from Neurospora crassa (strain ATCC 24698 / 74-OR23-1A / CBS 708.71 / DSM 1257 / FGSC 987).